The primary structure comprises 338 residues: RNA 3'-terminal phosphate cyclase (338 aa).

Residues glutamine 103 and tyrosine 283–glutamine 287 contribute to the ATP site. The Tele-AMP-histidine intermediate role is filled by histidine 308.

Belongs to the RNA 3'-terminal cyclase family. Type 1 subfamily.

The protein localises to the cytoplasm. It catalyses the reaction a 3'-end 3'-phospho-ribonucleotide-RNA + ATP = a 3'-end 2',3'-cyclophospho-ribonucleotide-RNA + AMP + diphosphate. Catalyzes the conversion of 3'-phosphate to a 2',3'-cyclic phosphodiester at the end of RNA. The mechanism of action of the enzyme occurs in 3 steps: (A) adenylation of the enzyme by ATP; (B) transfer of adenylate to an RNA-N3'P to produce RNA-N3'PP5'A; (C) and attack of the adjacent 2'-hydroxyl on the 3'-phosphorus in the diester linkage to produce the cyclic end product. The biological role of this enzyme is unknown but it is likely to function in some aspects of cellular RNA processing. In Escherichia coli O6:H1 (strain CFT073 / ATCC 700928 / UPEC), this protein is RNA 3'-terminal phosphate cyclase.